Consider the following 192-residue polypeptide: Adenylate kinase (192 aa).

Residue 11 to 16 (GSGKGT) coordinates ATP. Positions 31–60 (STGDIFRANVKGETPLGIEAKKYMDNGDFV) are NMP. Residues Thr32, Arg37, 58–60 (DFV), 86–89 (GYPR), and Gln93 contribute to the AMP site. The tract at residues 127 to 137 (GRAKETGRSDD) is LID. Arg128 contacts ATP. 2 residues coordinate AMP: Arg134 and Arg145. Gly173 provides a ligand contact to ATP.

Belongs to the adenylate kinase family. Monomer.

The protein localises to the cytoplasm. It carries out the reaction AMP + ATP = 2 ADP. Its pathway is purine metabolism; AMP biosynthesis via salvage pathway; AMP from ADP: step 1/1. Catalyzes the reversible transfer of the terminal phosphate group between ATP and AMP. Plays an important role in cellular energy homeostasis and in adenine nucleotide metabolism. The polypeptide is Adenylate kinase (Pseudarthrobacter chlorophenolicus (strain ATCC 700700 / DSM 12829 / CIP 107037 / JCM 12360 / KCTC 9906 / NCIMB 13794 / A6) (Arthrobacter chlorophenolicus)).